Consider the following 225-residue polypeptide: MKLFVGLGNPGARYAGNRHNIGYMAVEAIAADHGFGPWRARFQGLTSEGRLGSEQVLLLKPETFMNLSGQSVGEAMRFYKLTPADVIVFHDELDLAPGKLRLKQGGGHAGHNGLRSIHAHVGEAYGRVRLGIGHPGHKDAVAPYVLSDFAKADQDWLADLLRGISDGAEALARGDGAKFQNAVALRMQPPKPEKPKPAAKAPEAQAPEAAPDERSALQKLADRFR.

Residue Y14 participates in tRNA binding. H19 acts as the Proton acceptor in catalysis. Residues F64, N66, and N112 each coordinate tRNA. Positions 184 to 225 are disordered; it reads ALRMQPPKPEKPKPAAKAPEAQAPEAAPDERSALQKLADRFR. A compositionally biased stretch (low complexity) spans 198–209; that stretch reads AAKAPEAQAPEA. A compositionally biased stretch (basic and acidic residues) spans 211–225; that stretch reads PDERSALQKLADRFR.

The protein belongs to the PTH family. As to quaternary structure, monomer.

It localises to the cytoplasm. The catalysed reaction is an N-acyl-L-alpha-aminoacyl-tRNA + H2O = an N-acyl-L-amino acid + a tRNA + H(+). Its function is as follows. Hydrolyzes ribosome-free peptidyl-tRNAs (with 1 or more amino acids incorporated), which drop off the ribosome during protein synthesis, or as a result of ribosome stalling. Catalyzes the release of premature peptidyl moieties from peptidyl-tRNA molecules trapped in stalled 50S ribosomal subunits, and thus maintains levels of free tRNAs and 50S ribosomes. The protein is Peptidyl-tRNA hydrolase of Cereibacter sphaeroides (strain ATCC 17023 / DSM 158 / JCM 6121 / CCUG 31486 / LMG 2827 / NBRC 12203 / NCIMB 8253 / ATH 2.4.1.) (Rhodobacter sphaeroides).